The following is a 357-amino-acid chain: 3-isopropylmalate dehydrogenase (357 aa).

NAD(+) is bound at residue 76–89 (GPQWDTIDPALRPE). Substrate is bound by residues arginine 96, arginine 106, arginine 134, and aspartate 224. Mg(2+) is bound by residues aspartate 224, aspartate 248, and aspartate 252. 282-294 (GSAPDIAGKGIAN) provides a ligand contact to NAD(+).

It belongs to the isocitrate and isopropylmalate dehydrogenases family. LeuB type 1 subfamily. As to quaternary structure, homodimer. Mg(2+) serves as cofactor. It depends on Mn(2+) as a cofactor.

It localises to the cytoplasm. The enzyme catalyses (2R,3S)-3-isopropylmalate + NAD(+) = 4-methyl-2-oxopentanoate + CO2 + NADH. The protein operates within amino-acid biosynthesis; L-leucine biosynthesis; L-leucine from 3-methyl-2-oxobutanoate: step 3/4. Functionally, catalyzes the oxidation of 3-carboxy-2-hydroxy-4-methylpentanoate (3-isopropylmalate) to 3-carboxy-4-methyl-2-oxopentanoate. The product decarboxylates to 4-methyl-2 oxopentanoate. The protein is 3-isopropylmalate dehydrogenase of Xanthomonas axonopodis pv. citri (strain 306).